A 356-amino-acid polypeptide reads, in one-letter code: MKDAKPFPVLKNDNLLRAARGEVVDRVPVWVMRQAGRYLPEFQELRKHHDFFTVCRTPELACEVTMQPLRRFDLDASIIFSDILVIPQALGLTVEMHAGVGPVLPQPIVVPEDLKRLTPDGALSRLSYVGDAITMMRHKLEGRVPLIGFTGAPWTLMGYMIEGGGSKTMSKAKAWLNEHPEDSKLFLNLLTDAIVDYLEMQVKAGAQMLQVFESSAEHLSKEQFLQWCVPYLKRIRDELVDRLTKKAIPVVPMTLFAKGAGHSLKEQSELGYDVIGLDWTVDPLEARNLVGPNITLQGNLDPQDMYRDPDELRNLTTEMVHKFGKSRYIANLGHGITPQTPITSMEVLVEAVHKAL.

Residues arginine 33, alanine 35, arginine 37, arginine 46, aspartate 82, tyrosine 159, serine 214, and histidine 334 each contribute to the coproporphyrinogen I site. 3 residues coordinate coproporphyrinogen III: arginine 33, alanine 35, and arginine 37. Positions 82, 159, 214, and 334 each coordinate coproporphyrinogen III.

The protein belongs to the uroporphyrinogen decarboxylase family. Homodimer.

The protein resides in the cytoplasm. It localises to the cytosol. It carries out the reaction uroporphyrinogen III + 4 H(+) = coproporphyrinogen III + 4 CO2. Its pathway is porphyrin-containing compound metabolism; protoporphyrin-IX biosynthesis; coproporphyrinogen-III from 5-aminolevulinate: step 4/4. Functionally, catalyzes the decarboxylation of four acetate groups of uroporphyrinogen-III to yield coproporphyrinogen-III. The chain is Uroporphyrinogen decarboxylase from Drosophila melanogaster (Fruit fly).